Consider the following 525-residue polypeptide: tRNA-splicing endonuclease subunit Sen54 (525 aa).

An N-acetylmethionine modification is found at M1. A disordered region spans residues 1–46 (MEPEPEPGSVEVPAGRVLSASELRAARSRSQKLPQRSHGPKDFLPD). The segment covering 7 to 23 (PGSVEVPAGRVLSASEL) has biased composition (low complexity). S178 bears the Phosphoserine mark. Residue Y180 is modified to Phosphotyrosine. The segment covering 220–232 (LPPVSLAASSSPA) has biased composition (low complexity). The interval 220–273 (LPPVSLAASSSPACDQSSQYPEEKSQDSSPRQGSELPLQFLGSSEPCSDLARED) is disordered.

Belongs to the SEN54 family. In terms of assembly, tRNA splicing endonuclease is a heterotetramer composed of TSEN2, TSEN15, TSEN34/LENG5 and TSEN54. tRNA splicing endonuclease complex also contains proteins of the pre-mRNA 3'-end processing machinery such as CLP1, CPSF1, CPSF4 and CSTF2.

Its subcellular location is the nucleus. It localises to the nucleolus. Non-catalytic subunit of the tRNA-splicing endonuclease complex, a complex responsible for identification and cleavage of the splice sites in pre-tRNA. It cleaves pre-tRNA at the 5' and 3' splice sites to release the intron. The products are an intron and two tRNA half-molecules bearing 2',3' cyclic phosphate and 5'-OH termini. There are no conserved sequences at the splice sites, but the intron is invariably located at the same site in the gene, placing the splice sites an invariant distance from the constant structural features of the tRNA body. The tRNA splicing endonuclease is also involved in mRNA processing via its association with pre-mRNA 3'-end processing factors, establishing a link between pre-tRNA splicing and pre-mRNA 3'-end formation, suggesting that the endonuclease subunits function in multiple RNA-processing events. The sequence is that of tRNA-splicing endonuclease subunit Sen54 (Tsen54) from Mus musculus (Mouse).